Here is a 240-residue protein sequence, read N- to C-terminus: MIEIILAIDIIEGKAVRLTQGDYKQKKIYNQDPLEVAKKFEDYGIRRLHLVDLDGAKANFIVNYKILERIASHTSLIIDFSGGLKSDSDLKIAFNSGAKMVTGGSIAVKNPKIFKNWINKFGANCILLGADCRNNKIAVNGWTEETNEEILPFIKKWRKYGITKVICTDISKDGMLKGTSTELYKTIKKEDTSIYLIASGGVSCIYDIDMLQEAGLSGVIIGKAIYESKIQLKELKKYAC.

Catalysis depends on Asp9, which acts as the Proton acceptor. The active-site Proton donor is the Asp131.

It belongs to the HisA/HisF family.

The protein localises to the cytoplasm. The catalysed reaction is 1-(5-phospho-beta-D-ribosyl)-5-[(5-phospho-beta-D-ribosylamino)methylideneamino]imidazole-4-carboxamide = 5-[(5-phospho-1-deoxy-D-ribulos-1-ylimino)methylamino]-1-(5-phospho-beta-D-ribosyl)imidazole-4-carboxamide. The protein operates within amino-acid biosynthesis; L-histidine biosynthesis; L-histidine from 5-phospho-alpha-D-ribose 1-diphosphate: step 4/9. This chain is 1-(5-phosphoribosyl)-5-[(5-phosphoribosylamino)methylideneamino] imidazole-4-carboxamide isomerase, found in Azobacteroides pseudotrichonymphae genomovar. CFP2.